The primary structure comprises 254 residues: 3-deoxy-manno-octulosonate cytidylyltransferase (254 aa).

Belongs to the KdsB family.

It is found in the cytoplasm. It carries out the reaction 3-deoxy-alpha-D-manno-oct-2-ulosonate + CTP = CMP-3-deoxy-beta-D-manno-octulosonate + diphosphate. It participates in nucleotide-sugar biosynthesis; CMP-3-deoxy-D-manno-octulosonate biosynthesis; CMP-3-deoxy-D-manno-octulosonate from 3-deoxy-D-manno-octulosonate and CTP: step 1/1. Its pathway is bacterial outer membrane biogenesis; lipopolysaccharide biosynthesis. Its function is as follows. Activates KDO (a required 8-carbon sugar) for incorporation into bacterial lipopolysaccharide in Gram-negative bacteria. This chain is 3-deoxy-manno-octulosonate cytidylyltransferase, found in Ectopseudomonas mendocina (strain ymp) (Pseudomonas mendocina).